A 320-amino-acid chain; its full sequence is Putative protein FRMPD2-like (320 aa).

2 PDZ domains span residues 1 to 46 and 90 to 178; these read MTSI…ERRV and EVKL…CRPP. The tract at residues 215–239 is disordered; the sequence is DQEDSWRDSASPDAGEGLGLRPESS.

This Homo sapiens (Human) protein is Putative protein FRMPD2-like.